The following is a 344-amino-acid chain: Lipase chaperone (344 aa).

Residues 14–34 (AAIYGGVGLAAVAGVAMWSGA) traverse the membrane as a helical segment.

It belongs to the lipase chaperone family.

It is found in the cell inner membrane. In terms of biological role, may be involved in the folding of the extracellular lipase during its passage through the periplasm. This Burkholderia cenocepacia (strain ATCC BAA-245 / DSM 16553 / LMG 16656 / NCTC 13227 / J2315 / CF5610) (Burkholderia cepacia (strain J2315)) protein is Lipase chaperone.